A 512-amino-acid chain; its full sequence is D-alanine--D-alanyl carrier protein ligase (512 aa).

An ATP-binding site is contributed by 152–153 (TS). Residue D199 participates in D-alanine binding. 294–299 (NAYGPT) serves as a coordination point for ATP. D-alanine is bound at residue V303. Residues D385, 397–400 (YGGR), and K499 contribute to the ATP site. K499 serves as a coordination point for D-alanine.

The protein belongs to the ATP-dependent AMP-binding enzyme family. DltA subfamily.

It is found in the cytoplasm. It catalyses the reaction holo-[D-alanyl-carrier protein] + D-alanine + ATP = D-alanyl-[D-alanyl-carrier protein] + AMP + diphosphate. Its pathway is cell wall biogenesis; lipoteichoic acid biosynthesis. Its function is as follows. Catalyzes the first step in the D-alanylation of lipoteichoic acid (LTA), the activation of D-alanine and its transfer onto the D-alanyl carrier protein (Dcp) DltC. In an ATP-dependent two-step reaction, forms a high energy D-alanyl-AMP intermediate, followed by transfer of the D-alanyl residue as a thiol ester to the phosphopantheinyl prosthetic group of the Dcp. D-alanylation of LTA plays an important role in modulating the properties of the cell wall in Gram-positive bacteria, influencing the net charge of the cell wall. The protein is D-alanine--D-alanyl carrier protein ligase of Streptococcus pyogenes serotype M3 (strain SSI-1).